The sequence spans 134 residues: Small ribosomal subunit protein bS16 (134 aa).

The tract at residues 115-134 is disordered; the sequence is AKLRRRQAKKAAEAAGSAEG.

This sequence belongs to the bacterial ribosomal protein bS16 family.

The sequence is that of Small ribosomal subunit protein bS16 from Chlorobaculum tepidum (strain ATCC 49652 / DSM 12025 / NBRC 103806 / TLS) (Chlorobium tepidum).